The chain runs to 120 residues: UPF0231 protein YacL (120 aa).

It belongs to the UPF0231 family.

This is UPF0231 protein YacL from Escherichia fergusonii (strain ATCC 35469 / DSM 13698 / CCUG 18766 / IAM 14443 / JCM 21226 / LMG 7866 / NBRC 102419 / NCTC 12128 / CDC 0568-73).